Consider the following 60-residue polypeptide: Ixodegrin-Ip (60 aa).

The signal sequence occupies residues 1–21; the sequence is MNAAFIAALFILGALTLDAMA. The Cell attachment site motif lies at 49–51; the sequence is RGD.

This sequence belongs to the ixodegrin family. Post-translationally, contains 3 disulfide bonds. As to expression, expressed in salivary glands.

The protein resides in the secreted. Tick salivary platelet aggregation inhibitor that plays an important part in the anti-hemostatic strategy of ticks. Inhibits platelet aggregation induced by ADP, thrombin and thromboxane A2 (TXA2). Blocks platelet adhesion to soluble collagen (most probably through the binding to alpha-2/beta-1 integrin (ITGA2/ITGB1)) and binds to purified glycoprotein IIb/IIIa (ITGA2B/ITGB3) in a dose-dependent manner. In vivo, reduces thrombus weight effectively in a rat arteriovenous shunt model and inhibits thrombosis in a carrageenan-induced mouse tail thrombosis model. This is Ixodegrin-Ip from Ixodes pacificus (Western black-legged tick).